The chain runs to 404 residues: G-protein coupled receptor 182 (404 aa).

At 1 to 57 the chain is on the extracellular side; that stretch reads MSVKPSWGPGPSEGVTAVPTSDLGEIHNWTELLDLFNHTLSECHVELSQSTKRVVLF. Residues N28 and N37 are each glycosylated (N-linked (GlcNAc...) asparagine). A helical membrane pass occupies residues 58 to 79; sequence ALYLAMFVVGLVENLLVICVNW. The Cytoplasmic segment spans residues 80–90; it reads RGSGRAGLMNL. Residues 91 to 113 form a helical membrane-spanning segment; it reads YILNMAIADLGIVLSLPVWMLEV. At 114-127 the chain is on the extracellular side; the sequence is TLDYTWLWGSFSCR. The cysteines at positions 126 and 202 are disulfide-linked. Residues 128 to 149 form a helical membrane-spanning segment; it reads FTHYFYFVNMYSSIFFLVCLSV. Residues 150-170 are Cytoplasmic-facing; sequence DRYVTLTSASPSWQRYQHRVR. Residues 171–193 form a helical membrane-spanning segment; the sequence is RAMCAGIWVLSAIIPLPEVVHIQ. Residues 194–217 are Extracellular-facing; the sequence is LVEGPEPMCLFMAPFETYSTWALA. Residues 218 to 239 form a helical membrane-spanning segment; the sequence is VALSTTILGFLLPFPLITVFNV. Residues 240–258 lie on the Cytoplasmic side of the membrane; it reads LTACRLRQPGQPKSRRHCL. Residues 259–280 form a helical membrane-spanning segment; the sequence is LLCAYVAVFVMCWLPYHVTLLL. The Extracellular segment spans residues 281 to 299; the sequence is LTLHGTHISLHCHLVHLLY. Residues 300 to 320 form a helical membrane-spanning segment; the sequence is FFYDVIDCFSMLHCVINPILY. At 321–404 the chain is on the cytoplasmic side; sequence NFLSPHFRGR…ISPTQPLTPS (84 aa).

It belongs to the G-protein coupled receptor 1 family. In terms of tissue distribution, highly expressed in heart, skeletal muscle, immune system, adrenal gland and liver.

It localises to the cell membrane. Orphan receptor. The protein is G-protein coupled receptor 182 (GPR182) of Homo sapiens (Human).